The chain runs to 440 residues: Xylose isomerase (440 aa).

Active-site residues include His-100 and Asp-103. 7 residues coordinate Mg(2+): Glu-231, Glu-267, His-270, Asp-295, Asp-306, Asp-308, and Asp-338.

The protein belongs to the xylose isomerase family. In terms of assembly, homotetramer. Mg(2+) serves as cofactor.

The protein resides in the cytoplasm. It catalyses the reaction alpha-D-xylose = alpha-D-xylulofuranose. The protein is Xylose isomerase of Burkholderia multivorans (strain ATCC 17616 / 249).